A 270-amino-acid polypeptide reads, in one-letter code: ParA family protein MPN_688 (270 aa).

It belongs to the ParA family.

This chain is ParA family protein MPN_688, found in Mycoplasma pneumoniae (strain ATCC 29342 / M129 / Subtype 1) (Mycoplasmoides pneumoniae).